The sequence spans 358 residues: NADH-quinone oxidoreductase subunit H (358 aa).

8 helical membrane passes run 20–40, 95–115, 128–148, 168–188, 206–226, 253–273, 290–310, and 334–354; these read ITVG…IPLI, ALFY…WAVI, IGLL…IIAG, ISYE…SGSM, VFSW…ISAV, GFAF…ISAL, WGFI…AVLY, and VLIP…ISPL.

It belongs to the complex I subunit 1 family. As to quaternary structure, NDH-1 is composed of 14 different subunits. Subunits NuoA, H, J, K, L, M, N constitute the membrane sector of the complex.

The protein resides in the cell inner membrane. It carries out the reaction a quinone + NADH + 5 H(+)(in) = a quinol + NAD(+) + 4 H(+)(out). Its function is as follows. NDH-1 shuttles electrons from NADH, via FMN and iron-sulfur (Fe-S) centers, to quinones in the respiratory chain. The immediate electron acceptor for the enzyme in this species is believed to be ubiquinone. Couples the redox reaction to proton translocation (for every two electrons transferred, four hydrogen ions are translocated across the cytoplasmic membrane), and thus conserves the redox energy in a proton gradient. This subunit may bind ubiquinone. This Neisseria meningitidis serogroup A / serotype 4A (strain DSM 15465 / Z2491) protein is NADH-quinone oxidoreductase subunit H.